The sequence spans 273 residues: Kit ligand (273 aa).

The first 25 residues, 1-25, serve as a signal peptide directing secretion; sequence MKKTQTWILTCIYLQLLLFNPLVKT. The Extracellular portion of the chain corresponds to 26-214; sequence EGICRNRVTN…KNPPGDSSLH (189 aa). Intrachain disulfides connect C29–C114 and C68–C163. N-linked (GlcNAc...) asparagine; partial glycans are attached at residues N90 and N118. A glycan (N-linked (GlcNAc...) asparagine) is linked at N145. S167 carries an O-linked (GalNAc...) serine glycan. O-linked (GalNAc...) threonine glycans are attached at residues T168 and T180. N195 is a glycosylation site (N-linked (GlcNAc...) asparagine). A helical membrane pass occupies residues 215–237; the sequence is WAAMALPALFSLIIGFAFGALYW. Over 238–273 the chain is Cytoplasmic; that stretch reads KKRQPSLTRAVENIQINEEDNEISMLQEKEREFQEV.

This sequence belongs to the SCF family. As to quaternary structure, homodimer, non-covalently linked. Heterotetramer with KIT, binding two KIT molecules; thereby mediates KIT dimerization and subsequent activation by autophosphorylation. A soluble form (sKITLG) is produced by proteolytic processing of isoform 1 in the extracellular domain. In terms of processing, found in two differentially glycosylated forms, LMW-SCF and HMW-SCF. LMW-SCF is fully N-glycosylated at Asn-145, partially N-glycosylated at Asn-90, O-glycosylated at Ser-167, Thr-168 and Thr-180, and not glycosylated at Asn-97 or Asn-118. HMW-SCF is N-glycosylated at Asn-118, Asn-90 and Asn-145, O-glycosylated at Ser-167, Thr-168 and Thr-180, and not glycosylated at Asn-97. Post-translationally, a soluble form exists as a cleavage product of the extracellular domain.

The protein resides in the cell membrane. Its subcellular location is the cytoplasm. The protein localises to the cytoskeleton. It is found in the cell projection. It localises to the lamellipodium. The protein resides in the filopodium. Its subcellular location is the secreted. Functionally, ligand for the receptor-type protein-tyrosine kinase KIT. Plays an essential role in the regulation of cell survival and proliferation, hematopoiesis, stem cell maintenance, gametogenesis, mast cell development, migration and function, and in melanogenesis. KITLG/SCF binding can activate several signaling pathways. Promotes phosphorylation of PIK3R1, the regulatory subunit of phosphatidylinositol 3-kinase, and subsequent activation of the kinase AKT1. KITLG/SCF and KIT also transmit signals via GRB2 and activation of RAS, RAF1 and the MAP kinases MAPK1/ERK2 and/or MAPK3/ERK1. KITLG/SCF and KIT promote activation of STAT family members STAT1, STAT3 and STAT5. KITLG/SCF and KIT promote activation of PLCG1, leading to the production of the cellular signaling molecules diacylglycerol and inositol 1,4,5-trisphosphate. KITLG/SCF acts synergistically with other cytokines, probably interleukins. The chain is Kit ligand from Homo sapiens (Human).